The sequence spans 225 residues: Histone H1.11L (225 aa).

Composition is skewed to low complexity over residues 1–23 (MSET…PAKA) and 31–43 (AAGG…PAGP). 2 disordered regions span residues 1–46 (MSET…PSVT) and 94–225 (SKGT…AKKK). S2 is modified (N-acetylserine). Residues 41–114 (AGPSVTELIT…GASGSFRLSK (74 aa)) form the H15 domain. Composition is skewed to basic residues over residues 123–138 (APKK…KPAA), 146–163 (KKPK…KAKK), 171–189 (KSAK…KKAV), and 198–225 (KAVK…AKKK).

Belongs to the histone H1/H5 family.

It localises to the nucleus. The protein localises to the chromosome. Histones H1 are necessary for the condensation of nucleosome chains into higher-order structures. This is Histone H1.11L from Gallus gallus (Chicken).